The sequence spans 459 residues: Disease resistance protein CHL1 (459 aa).

Residues 16–170 form the TIR domain; sequence REVDVFLSFC…QIARDISLVV (155 aa). Glu89 is a catalytic residue. Residues 191–401 enclose the NB-ARC domain; that stretch reads VYDLLALEVN…LLKLKAKQGG (211 aa). Over residues 429 to 440 the composition is skewed to basic and acidic residues; sequence ERKESSQDKSQQ. The tract at residues 429 to 459 is disordered; sequence ERKESSQDKSQQESEVAADILIGKESSQDKQ.

In terms of tissue distribution, mostly expressed in leaves, stems and roots, and, to a lower extent, in flowers and siliques.

The protein localises to the cytoplasm. It catalyses the reaction NAD(+) + H2O = ADP-D-ribose + nicotinamide + H(+). In terms of biological role, confers resistance to low temperatures by limiting chloroplast damage and cell death, thus maintaining growth homeostasis. The sequence is that of Disease resistance protein CHL1 from Arabidopsis thaliana (Mouse-ear cress).